The following is an 80-amino-acid chain: uncharacterized protein (80 aa).

This is an uncharacterized protein from Lepidoptera (butterflies and moths).